A 618-amino-acid chain; its full sequence is Proline--tRNA ligase (618 aa).

Belongs to the class-II aminoacyl-tRNA synthetase family. ProS type 1 subfamily. As to quaternary structure, homodimer.

It is found in the cytoplasm. The enzyme catalyses tRNA(Pro) + L-proline + ATP = L-prolyl-tRNA(Pro) + AMP + diphosphate. Its function is as follows. Catalyzes the attachment of proline to tRNA(Pro) in a two-step reaction: proline is first activated by ATP to form Pro-AMP and then transferred to the acceptor end of tRNA(Pro). As ProRS can inadvertently accommodate and process non-cognate amino acids such as alanine and cysteine, to avoid such errors it has two additional distinct editing activities against alanine. One activity is designated as 'pretransfer' editing and involves the tRNA(Pro)-independent hydrolysis of activated Ala-AMP. The other activity is designated 'posttransfer' editing and involves deacylation of mischarged Ala-tRNA(Pro). The misacylated Cys-tRNA(Pro) is not edited by ProRS. The chain is Proline--tRNA ligase from Streptococcus pyogenes serotype M18 (strain MGAS8232).